We begin with the raw amino-acid sequence, 228 residues long: Ribonuclease 3 (228 aa).

Positions Arg5 to Gly134 constitute an RNase III domain. Glu47 is a binding site for Mg(2+). Asp51 is a catalytic residue. Positions 120 and 123 each coordinate Mg(2+). Glu123 is an active-site residue. Residues Asp160 to Gln228 enclose the DRBM domain.

The protein belongs to the ribonuclease III family. In terms of assembly, homodimer. Requires Mg(2+) as cofactor.

It is found in the cytoplasm. It carries out the reaction Endonucleolytic cleavage to 5'-phosphomonoester.. Functionally, digests double-stranded RNA. Involved in the processing of primary rRNA transcript to yield the immediate precursors to the large and small rRNAs (23S and 16S). Processes some mRNAs, and tRNAs when they are encoded in the rRNA operon. Processes pre-crRNA and tracrRNA of type II CRISPR loci if present in the organism. This is Ribonuclease 3 from Streptococcus agalactiae serotype III (strain NEM316).